Reading from the N-terminus, the 313-residue chain is 4-hydroxy-3-methylbut-2-enyl diphosphate reductase (313 aa).

Cysteine 12 contributes to the [4Fe-4S] cluster binding site. 2 residues coordinate (2E)-4-hydroxy-3-methylbut-2-enyl diphosphate: histidine 41 and histidine 74. Residues histidine 41 and histidine 74 each contribute to the dimethylallyl diphosphate site. Histidine 41 and histidine 74 together coordinate isopentenyl diphosphate. Cysteine 96 contacts [4Fe-4S] cluster. Histidine 124 is a binding site for (2E)-4-hydroxy-3-methylbut-2-enyl diphosphate. A dimethylallyl diphosphate-binding site is contributed by histidine 124. Residue histidine 124 participates in isopentenyl diphosphate binding. Glutamate 126 (proton donor) is an active-site residue. Residue threonine 167 coordinates (2E)-4-hydroxy-3-methylbut-2-enyl diphosphate. Residue cysteine 197 coordinates [4Fe-4S] cluster. The (2E)-4-hydroxy-3-methylbut-2-enyl diphosphate site is built by serine 225, serine 226, asparagine 227, and serine 269. Dimethylallyl diphosphate is bound by residues serine 225, serine 226, asparagine 227, and serine 269. Serine 225, serine 226, asparagine 227, and serine 269 together coordinate isopentenyl diphosphate.

The protein belongs to the IspH family. As to quaternary structure, homodimer. Requires [4Fe-4S] cluster as cofactor.

It carries out the reaction isopentenyl diphosphate + 2 oxidized [2Fe-2S]-[ferredoxin] + H2O = (2E)-4-hydroxy-3-methylbut-2-enyl diphosphate + 2 reduced [2Fe-2S]-[ferredoxin] + 2 H(+). The enzyme catalyses dimethylallyl diphosphate + 2 oxidized [2Fe-2S]-[ferredoxin] + H2O = (2E)-4-hydroxy-3-methylbut-2-enyl diphosphate + 2 reduced [2Fe-2S]-[ferredoxin] + 2 H(+). The protein operates within isoprenoid biosynthesis; dimethylallyl diphosphate biosynthesis; dimethylallyl diphosphate from (2E)-4-hydroxy-3-methylbutenyl diphosphate: step 1/1. Its pathway is isoprenoid biosynthesis; isopentenyl diphosphate biosynthesis via DXP pathway; isopentenyl diphosphate from 1-deoxy-D-xylulose 5-phosphate: step 6/6. Catalyzes the conversion of 1-hydroxy-2-methyl-2-(E)-butenyl 4-diphosphate (HMBPP) into a mixture of isopentenyl diphosphate (IPP) and dimethylallyl diphosphate (DMAPP). Acts in the terminal step of the DOXP/MEP pathway for isoprenoid precursor biosynthesis. In Buchnera aphidicola subsp. Schizaphis graminum (strain Sg), this protein is 4-hydroxy-3-methylbut-2-enyl diphosphate reductase.